The primary structure comprises 35 residues: Probable L,D-transpeptidase ErfK/SrfK (35 aa).

A signal peptide spans 1 to 21 (MRRVKLLCTALMLLASHGALA).

The protein belongs to the YkuD family.

The protein resides in the periplasm. The protein operates within cell wall biogenesis; peptidoglycan biosynthesis. The protein is Probable L,D-transpeptidase ErfK/SrfK (erfK) of Klebsiella aerogenes (Enterobacter aerogenes).